We begin with the raw amino-acid sequence, 418 residues long: 3-isopropylmalate dehydratase large subunit (418 aa).

C298, C358, and C361 together coordinate [4Fe-4S] cluster.

This sequence belongs to the aconitase/IPM isomerase family. LeuC type 2 subfamily. As to quaternary structure, heterodimer of LeuC and LeuD. [4Fe-4S] cluster serves as cofactor.

The enzyme catalyses (2R,3S)-3-isopropylmalate = (2S)-2-isopropylmalate. The protein operates within amino-acid biosynthesis; L-leucine biosynthesis; L-leucine from 3-methyl-2-oxobutanoate: step 2/4. Functionally, catalyzes the isomerization between 2-isopropylmalate and 3-isopropylmalate, via the formation of 2-isopropylmaleate. This Thermoanaerobacter sp. (strain X514) protein is 3-isopropylmalate dehydratase large subunit.